Consider the following 809-residue polypeptide: Cell division control protein 48 homolog A (809 aa).

S2 carries the N-acetylserine modification. Position 41 is a phosphoserine (S41). Residues G210, 248-256, and H387 contribute to the ADP site; that span reads GPPGSGKTL. Residue 521–529 coordinates ATP; that stretch reads GPPGCGKTL. The disordered stretch occupies residues 782–809; that stretch reads AGSGATTGVADPFATSAAAAGDDDDLYN. The segment covering 791-801 has biased composition (low complexity); sequence ADPFATSAAAA.

The protein belongs to the AAA ATPase family. In terms of assembly, homohexamer. Interacts with SERK1, GRF6, KAPP and SYP31, but not with KNOLLE. Component of the SERK1 signaling complex, composed of KAPP, CDC48A, GRF6 or GRF7, SERK1, SERK2, SERK3/BAK1 and BRI1. Interacts with PUX1, PUX2, PUX3, PUX4, PUX5, PUX7 and PUX11 via its N-terminus. Post-translationally, phosphorylated on at least one threonine residue and on Ser-41 by SERK1.

It localises to the nucleus. The protein localises to the cytoplasm. It is found in the cytoskeleton. Its subcellular location is the phragmoplast. The protein resides in the cell membrane. Probably functions in cell division and growth processes. Interacts with certain SNAREs as part of specialized membrane fusion events where vesicles from the same organelle fuse (homotypic fusion). This chain is Cell division control protein 48 homolog A (CDC48A), found in Arabidopsis thaliana (Mouse-ear cress).